We begin with the raw amino-acid sequence, 1279 residues long: Sterol regulatory element-binding protein cleavage-activating protein (1279 aa).

At 1-18 (MTLTERLREKISRAFYNH) the chain is on the cytoplasmic side. Residues 19 to 39 (GLLCASYPIPIILFTGFCILA) traverse the membrane as a helical segment. Residues 40-279 (CCYPLLKLPL…SLVHVHFKEE (240 aa)) are Lumenal-facing. The tract at residues 46 to 284 (KLPLPGTGPV…HFKEEIGVAE (239 aa)) is loop-1. The disordered stretch occupies residues 60–80 (PVKDYSPPPVDSDRKQGEPTE). An N-linked (GlcNAc...) asparagine glycan is attached at Asn-263. Residues 280–300 (IGVAELIPLVTTYIILFAYIY) form a helical membrane-spanning segment. One can recognise an SSD domain in the interval 284–442 (ELIPLVTTYI…MLFFTTVLSI (159 aa)). Residues 301–312 (FSTRKIDMVKSK) lie on the Cytoplasmic side of the membrane. Residues 313–333 (WGLALAAVVTVLSSLLMSVGL) form a helical membrane-spanning segment. Over 334-344 (CTLFGLTPTLN) the chain is Lumenal. A helical transmembrane segment spans residues 345 to 365 (GGEIFPYLVVVIGLENVLVLT). Residues 366–401 (KSVVSTPVDLEVKLRIAQGLSSESWSIMKNMATELG) lie on the Cytoplasmic side of the membrane. A helical membrane pass occupies residues 402 to 422 (IILIGYFTLVPAIQEFCLFAV). Residue Val-423 is a topological domain, lumenal. Residues 424 to 444 (GLVSDFFLQMLFFTTVLSIDI) traverse the membrane as a helical segment. Residues 445–518 (RRMELADLNK…FLARTRLAQR (74 aa)) lie on the Cytoplasmic side of the membrane. The ER export signal signature appears at 447–452 (MELADL). Glycyl lysine isopeptide (Lys-Gly) (interchain with G-Cter in ubiquitin) cross-links involve residues Lys-454 and Lys-466. The helical transmembrane segment at 519-539 (LIMAGTVVWIGILVYTDPAGL) threads the bilayer. Residues 535–710 (DPAGLRNYLA…QAHGDVTLYK (176 aa)) are loop-7. Over 540 to 709 (RNYLAAQVTE…VQAHGDVTLY (170 aa)) the chain is Lumenal. Positions 579–615 (IFPPDAPKLPENQTSPGESPERGGPAEVVHDSPVPEV) are disordered. 2 N-linked (GlcNAc...) asparagine glycosylation sites follow: Asn-590 and Asn-641. The segment at 668–696 (EGRHPQDGRSAWPPPGPIPAGHWEAGPKG) is disordered. A helical transmembrane segment spans residues 710 to 730 (KVAALGLATGIVLVLLLLCLY). Topologically, residues 731-1279 (RVLCPRNYGQ…YVPSVLEKLD (549 aa)) are cytoplasmic. The interval 731 to 1279 (RVLCPRNYGQ…YVPSVLEKLD (549 aa)) is interaction with SREBF2. The stretch at 771 to 811 (VLRGHLMDIECLASDGMLLVSCCLAGHVCVWDAQTGDCLTR) is one WD 1 repeat. Residues 811 to 904 (RIPRPGRQRR…PRHRAVCGRS (94 aa)) form a disordered region. Residues Ser-822, Ser-838, and Ser-851 each carry the phosphoserine modification. Polar residues predominate over residues 877-891 (IDTNFSAQPRSSQPT). Ser-907 and Ser-937 each carry phosphoserine. Positions 931-962 (PALRPPSPGPVLSQAPEDEGGSPEKGSPSLAW) are disordered. WD repeat units follow at residues 952–1002 (SPEK…LCCS) and 1005–1042 (EVSS…ALSP). Arg-1051 carries the post-translational modification Omega-N-methylarginine. 4 WD repeats span residues 1077–1114 (AHQK…CLFT), 1117–1155 (GHSG…RVSH), 1158–1195 (AHRG…KFYS), and 1197–1235 (QQDL…LLQT).

This sequence belongs to the WD repeat SCAP family. Membrane region forms a homotetramer. Component of the SCAP-SREBP complex (composed of SCAP and SREBF1/SREBP1 or SREBF2/SREBP2); interacts with SREBF1/SREBP1 or SREBF2/SREBP2 through its C-terminal cytoplasmic domain. Forms a ternary complex with INSIG1 or INSIG2 through its transmembrane domains at high sterol concentrations. Interacts with PAQR3; the interaction anchors the SCAP-SREBP complex to the Golgi apparatus in low cholesterol conditions. Interacts with the SEC23-SEC24 complex in a SAR1-GTP-dependent manner through an ER export signal in its third cytoplasmic loop. Interacts with RNF139; the interaction inhibits the interaction of SCAP with SEC24B and hampering the ER to Golgi transport of the SCAP-SREBP complex. Interacts with SPRING1. Post-translationally, ubiquitinated at Lys-454 and Lys-466. RNF145 triggers ubiquitination of SCAP, likely inhibiting SCAP-SREBP complex transport to the Golgi apparatus and the subsequent processing/maturation of SREBF2/SREBP2.

The protein localises to the endoplasmic reticulum membrane. The protein resides in the golgi apparatus membrane. It is found in the cytoplasmic vesicle. It localises to the COPII-coated vesicle membrane. Its function is as follows. Escort protein required for cholesterol as well as lipid homeostasis. Regulates export of the SCAP-SREBP complex from the endoplasmic reticulum to the Golgi upon low cholesterol, thereby regulating the processing of sterol regulatory element-binding proteins (SREBPs) SREBF1/SREBP1 and SREBF2/SREBP2. At high sterol concentrations, formation of a ternary complex with INSIG (INSIG1 or INSIG2) leads to mask the ER export signal in SCAP, promoting retention of the complex in the endoplasmic reticulum. Low sterol concentrations trigger release of INSIG, a conformational change in the SSD domain of SCAP, unmasking of the ER export signal, promoting recruitment into COPII-coated vesicles and transport of the SCAP-SREBP to the Golgi: in the Golgi, SREBPs are then processed, releasing the transcription factor fragment of SREBPs from the membrane, its import into the nucleus and up-regulation of LDLR, INSIG1 and the mevalonate pathway. Binds cholesterol via its SSD domain. In Homo sapiens (Human), this protein is Sterol regulatory element-binding protein cleavage-activating protein.